A 113-amino-acid polypeptide reads, in one-letter code: Large ribosomal subunit protein bL17 (113 aa).

Belongs to the bacterial ribosomal protein bL17 family. As to quaternary structure, part of the 50S ribosomal subunit. Contacts protein L32.

The chain is Large ribosomal subunit protein bL17 from Clostridium beijerinckii (strain ATCC 51743 / NCIMB 8052) (Clostridium acetobutylicum).